The sequence spans 361 residues: Phosphoserine aminotransferase (361 aa).

Arg-43 serves as a coordination point for L-glutamate. Pyridoxal 5'-phosphate contacts are provided by residues 77 to 78 (AS), Trp-103, Thr-153, Asp-173, and Gln-196. Lys-197 is modified (N6-(pyridoxal phosphate)lysine). 238-239 (NT) contributes to the pyridoxal 5'-phosphate binding site.

This sequence belongs to the class-V pyridoxal-phosphate-dependent aminotransferase family. SerC subfamily. Homodimer. The cofactor is pyridoxal 5'-phosphate.

The protein localises to the cytoplasm. It carries out the reaction O-phospho-L-serine + 2-oxoglutarate = 3-phosphooxypyruvate + L-glutamate. The enzyme catalyses 4-(phosphooxy)-L-threonine + 2-oxoglutarate = (R)-3-hydroxy-2-oxo-4-phosphooxybutanoate + L-glutamate. Its pathway is amino-acid biosynthesis; L-serine biosynthesis; L-serine from 3-phospho-D-glycerate: step 2/3. It participates in cofactor biosynthesis; pyridoxine 5'-phosphate biosynthesis; pyridoxine 5'-phosphate from D-erythrose 4-phosphate: step 3/5. Its function is as follows. Catalyzes the reversible conversion of 3-phosphohydroxypyruvate to phosphoserine and of 3-hydroxy-2-oxo-4-phosphonooxybutanoate to phosphohydroxythreonine. In Pseudomonas aeruginosa (strain ATCC 15692 / DSM 22644 / CIP 104116 / JCM 14847 / LMG 12228 / 1C / PRS 101 / PAO1), this protein is Phosphoserine aminotransferase.